The chain runs to 844 residues: Translation initiation factor IF-2 (844 aa).

Over residues 120–132 the composition is skewed to polar residues; the sequence is RNSVNLVQPQQEK. The tract at residues 120-220 is disordered; it reads RNSVNLVQPQ…SGKGFKKANP (101 aa). Over residues 161–175 the composition is skewed to basic and acidic residues; sequence DEEKSSEDKSTESKN. Positions 205–219 are enriched in basic residues; that stretch reads SKAKKASGKGFKKAN. Residues 343–510 form the tr-type G domain; it reads SRAPVVTIMG…AVLLQSEVLE (168 aa). Positions 352-359 are G1; the sequence is GHVDHGKT. 352 to 359 contacts GTP; the sequence is GHVDHGKT. The segment at 377–381 is G2; that stretch reads GITQH. Positions 398–401 are G3; that stretch reads DTPG. Residues 398–402 and 452–455 contribute to the GTP site; these read DTPGH and NKID. Residues 452 to 455 form a G4 region; it reads NKID. The tract at residues 488 to 490 is G5; the sequence is SAK.

It belongs to the TRAFAC class translation factor GTPase superfamily. Classic translation factor GTPase family. IF-2 subfamily.

Its subcellular location is the cytoplasm. In terms of biological role, one of the essential components for the initiation of protein synthesis. Protects formylmethionyl-tRNA from spontaneous hydrolysis and promotes its binding to the 30S ribosomal subunits. Also involved in the hydrolysis of GTP during the formation of the 70S ribosomal complex. This Francisella philomiragia subsp. philomiragia (strain ATCC 25017 / CCUG 19701 / FSC 153 / O#319-036) protein is Translation initiation factor IF-2.